A 205-amino-acid polypeptide reads, in one-letter code: Ribonuclease HII (205 aa).

An RNase H type-2 domain is found at 14–205 (ERICGIDEAG…SFKVRRLNEA (192 aa)). Positions 20, 21, and 117 each coordinate a divalent metal cation.

This sequence belongs to the RNase HII family. Requires Mn(2+) as cofactor. The cofactor is Mg(2+).

It is found in the cytoplasm. The enzyme catalyses Endonucleolytic cleavage to 5'-phosphomonoester.. Functionally, endonuclease that specifically degrades the RNA of RNA-DNA hybrids. In Chlorobium phaeovibrioides (strain DSM 265 / 1930) (Prosthecochloris vibrioformis (strain DSM 265)), this protein is Ribonuclease HII.